We begin with the raw amino-acid sequence, 173 residues long: Large ribosomal subunit protein uL16 (173 aa).

The protein belongs to the universal ribosomal protein uL16 family.

This is Large ribosomal subunit protein uL16 from Methanosarcina mazei (strain ATCC BAA-159 / DSM 3647 / Goe1 / Go1 / JCM 11833 / OCM 88) (Methanosarcina frisia).